The primary structure comprises 460 residues: Exodeoxyribonuclease 7 large subunit (460 aa).

Belongs to the XseA family. As to quaternary structure, heterooligomer composed of large and small subunits.

Its subcellular location is the cytoplasm. It catalyses the reaction Exonucleolytic cleavage in either 5'- to 3'- or 3'- to 5'-direction to yield nucleoside 5'-phosphates.. Functionally, bidirectionally degrades single-stranded DNA into large acid-insoluble oligonucleotides, which are then degraded further into small acid-soluble oligonucleotides. The protein is Exodeoxyribonuclease 7 large subunit of Edwardsiella ictaluri (strain 93-146).